The chain runs to 170 residues: Large ribosomal subunit protein uL10 (170 aa).

Belongs to the universal ribosomal protein uL10 family. Part of the ribosomal stalk of the 50S ribosomal subunit. The N-terminus interacts with L11 and the large rRNA to form the base of the stalk. The C-terminus forms an elongated spine to which L12 dimers bind in a sequential fashion forming a multimeric L10(L12)X complex.

Its function is as follows. Forms part of the ribosomal stalk, playing a central role in the interaction of the ribosome with GTP-bound translation factors. The chain is Large ribosomal subunit protein uL10 from Lactobacillus helveticus (strain DPC 4571).